We begin with the raw amino-acid sequence, 280 residues long: Chemotaxis protein methyltransferase 2 (280 aa).

The region spanning 10–280 (FGNQEFHYTR…SVGQTVYSPA (271 aa)) is the CheR-type methyltransferase domain. Residues N85, T87, R91, E125, D150, 208–209 (NL), and 226–227 (RN) each bind S-adenosyl-L-methionine.

As to quaternary structure, interacts with the C-terminal pentapeptide GWEEF of the methyl-accepting chemotaxis protein McpB.

The catalysed reaction is L-glutamyl-[protein] + S-adenosyl-L-methionine = [protein]-L-glutamate 5-O-methyl ester + S-adenosyl-L-homocysteine. In terms of biological role, methylation of the methyl-accepting chemotaxis proteins (MCP) to form gamma-glutamyl methyl ester residues in MCP. It specifically targets the McpB chemoreceptor. This chain is Chemotaxis protein methyltransferase 2, found in Pseudomonas aeruginosa (strain ATCC 15692 / DSM 22644 / CIP 104116 / JCM 14847 / LMG 12228 / 1C / PRS 101 / PAO1).